We begin with the raw amino-acid sequence, 346 residues long: Propane 2-monooxygenase, reductase component (346 aa).

In terms of domain architecture, 2Fe-2S ferredoxin-type spans H5 to D94. C39, C44, C46, and C78 together coordinate [2Fe-2S] cluster. An FAD-binding FR-type domain is found at I104–R205.

It belongs to the bacterial ring-hydroxylating dioxygenase ferredoxin reductase family. The propane 2-monooxygenase multicomponent enzyme system is composed of an electron transfer component and a monooxygenase component interacting with the effector protein PrmD. The electron transfer component is composed of a reductase (PrmB), and the monooxygenase component is formed by a large subunit (PrmA) and a small subunit (PrmC). The cofactor is FAD. Requires [2Fe-2S] cluster as cofactor.

Its function is as follows. Reductase component of the propane 2-monooxygenase multicomponent enzyme system which is involved in the degradation of propane via the O2-dependent hydroxylation of propane. Reductase catalyzes the transfer of electrons from NADH or NADPH to monooxygenase. This chain is Propane 2-monooxygenase, reductase component, found in Gordonia sp. (strain TY-5).